Consider the following 82-residue polypeptide: DNA-directed RNA polymerase subunit omega (82 aa).

It belongs to the RNA polymerase subunit omega family. In terms of assembly, in cyanobacteria the RNAP catalytic core is composed of 2 alpha, 1 beta, 1 beta', 1 gamma and 1 omega subunit. When a sigma factor is associated with the core the holoenzyme is formed, which can initiate transcription.

The enzyme catalyses RNA(n) + a ribonucleoside 5'-triphosphate = RNA(n+1) + diphosphate. In terms of biological role, promotes RNA polymerase assembly. Latches the N- and C-terminal regions of the beta' subunit thereby facilitating its interaction with the beta and alpha subunits. The protein is DNA-directed RNA polymerase subunit omega of Trichodesmium erythraeum (strain IMS101).